We begin with the raw amino-acid sequence, 279 residues long: Urease accessory protein UreD (279 aa).

It belongs to the UreD family. As to quaternary structure, ureD, UreF and UreG form a complex that acts as a GTP-hydrolysis-dependent molecular chaperone, activating the urease apoprotein by helping to assemble the nickel containing metallocenter of UreC. The UreE protein probably delivers the nickel.

It is found in the cytoplasm. Its function is as follows. Required for maturation of urease via the functional incorporation of the urease nickel metallocenter. The polypeptide is Urease accessory protein UreD (Trichormus variabilis (strain ATCC 29413 / PCC 7937) (Anabaena variabilis)).